Consider the following 1001-residue polypeptide: Ankyrin repeat domain-containing protein 35 (1001 aa).

6 ANK repeats span residues 53-82, 86-115, 119-148, 152-181, 185-214, and 218-247; these read NGQS…DINS, DGST…NEDA, ENRS…FLDV, DGRT…RVNV, NDKS…DAGA, and TGHD…RRRR. Disordered stretches follow at residues 256-296, 352-482, and 559-601; these read PDLA…PCSE, PRAS…VAEP, and PEVP…ALGG. The segment covering 281-295 has biased composition (acidic residues); that stretch reads PEEEQEEKEDEDPCS. The stretch at 295 to 344 forms a coiled coil; the sequence is SEEWRWKYEEERRKVVRLEQELVQKTEECKTQAAAYLDLENQIREQAQEL. Positions 402-422 are enriched in basic and acidic residues; it reads KKAEDSAPGKIQYEVHGRSQP. Residues 423-434 show a composition bias toward low complexity; it reads EEQGPPQSPASE. The span at 440-450 shows a compositional bias: polar residues; the sequence is TGQQLTTNGAQ. A compositionally biased stretch (basic and acidic residues) spans 579–588; the sequence is KQDEEKEKRV. 3 coiled-coil regions span residues 610–696, 733–810, and 851–968; these read KGQL…LLAS, ISTL…IGKL, and QELK…HEEI. The segment at 879-902 is disordered; that stretch reads RRSGDLAAQAAEQERQASEMRGRS. Basic and acidic residues predominate over residues 890–902; the sequence is EQERQASEMRGRS.

This chain is Ankyrin repeat domain-containing protein 35 (ANKRD35), found in Homo sapiens (Human).